The primary structure comprises 286 residues: Eukaryotic translation initiation factor 3 subunit J (286 aa).

3 disordered regions span residues 1-35 (MSWD…DSWD), 141-162 (AASG…HPLF), and 229-258 (KAER…AVKT). Residues 21-35 (WEEEGNDEPLLDSWD) are compositionally biased toward acidic residues. A coiled-coil region spans residues 35 to 75 (DIDEEEVARKKKEEEAKKKAEKEALKKKQEESKAKKLSKNK).

This sequence belongs to the eIF-3 subunit J family. As to quaternary structure, component of the eukaryotic translation initiation factor 3 (eIF-3) complex.

The protein localises to the cytoplasm. Functionally, component of the eukaryotic translation initiation factor 3 (eIF-3) complex, which is involved in protein synthesis of a specialized repertoire of mRNAs and, together with other initiation factors, stimulates binding of mRNA and methionyl-tRNAi to the 40S ribosome. The eIF-3 complex specifically targets and initiates translation of a subset of mRNAs involved in cell proliferation. The chain is Eukaryotic translation initiation factor 3 subunit J from Debaryomyces hansenii (strain ATCC 36239 / CBS 767 / BCRC 21394 / JCM 1990 / NBRC 0083 / IGC 2968) (Yeast).